The following is a 201-amino-acid chain: Recombination protein RecR (201 aa).

The C4-type zinc-finger motif lies at 60 to 75 (CSCCGNVDTSDPCTIC). In terms of domain architecture, Toprim spans 83–178 (ATLIVVEDVS…RVTRLAHGVP (96 aa)).

Belongs to the RecR family.

In terms of biological role, may play a role in DNA repair. It seems to be involved in an RecBC-independent recombinational process of DNA repair. It may act with RecF and RecO. This is Recombination protein RecR from Brucella ovis (strain ATCC 25840 / 63/290 / NCTC 10512).